A 666-amino-acid chain; its full sequence is DNA mismatch repair protein MutL (666 aa).

Belongs to the DNA mismatch repair MutL/HexB family.

Its function is as follows. This protein is involved in the repair of mismatches in DNA. It is required for dam-dependent methyl-directed DNA mismatch repair. May act as a 'molecular matchmaker', a protein that promotes the formation of a stable complex between two or more DNA-binding proteins in an ATP-dependent manner without itself being part of a final effector complex. This is DNA mismatch repair protein MutL from Clostridium botulinum (strain ATCC 19397 / Type A).